The following is an 814-amino-acid chain: Testis-specific zinc finger protein topi (814 aa).

10 C2H2-type zinc fingers span residues 228–250 (NECT…MEKH), 275–297 (VKCN…GLIH), 360–382 (LQCE…SASH), 429–453 (FVCN…TSFH), 467–490 (LPCD…EEKH), 511–533 (YLCD…LRFH), 539–564 (FVCQ…RKCH), 570–592 (YLCL…RLIH), 598–620 (YECE…QRIH), and 626–649 (YSCL…RARH). Positions 669-705 (TAAAQKAQSHNPEQQDNDVAGGASTSDVPSGSGFMST) are disordered. The segment covering 691–705 (ASTSDVPSGSGFMST) has biased composition (polar residues).

As to quaternary structure, interacts with comr. In terms of tissue distribution, expressed in testis; primary spermatocytes.

Its subcellular location is the nucleus. Its function is as follows. Required for male meiotic division and spermatid differentiation. Required for accumulation of aly and comr on chromatin. May function as a transcription factor. The polypeptide is Testis-specific zinc finger protein topi (topi) (Drosophila melanogaster (Fruit fly)).